Here is a 759-residue protein sequence, read N- to C-terminus: Xaa-Pro dipeptidyl-peptidase (759 aa).

Residues serine 347, aspartate 467, and histidine 497 each act as charge relay system in the active site.

Belongs to the peptidase S15 family. Homodimer.

The protein resides in the cytoplasm. It carries out the reaction Hydrolyzes Xaa-Pro-|- bonds to release unblocked, N-terminal dipeptides from substrates including Ala-Pro-|-p-nitroanilide and (sequentially) Tyr-Pro-|-Phe-Pro-|-Gly-Pro-|-Ile.. Its function is as follows. Removes N-terminal dipeptides sequentially from polypeptides having unsubstituted N-termini provided that the penultimate residue is proline. The polypeptide is Xaa-Pro dipeptidyl-peptidase (Streptococcus gordonii (strain Challis / ATCC 35105 / BCRC 15272 / CH1 / DL1 / V288)).